Reading from the N-terminus, the 130-residue chain is Small ribosomal subunit protein uS8 (130 aa).

The protein belongs to the universal ribosomal protein uS8 family. Part of the 30S ribosomal subunit. Contacts proteins S5 and S12.

One of the primary rRNA binding proteins, it binds directly to 16S rRNA central domain where it helps coordinate assembly of the platform of the 30S subunit. The chain is Small ribosomal subunit protein uS8 from Pseudomonas aeruginosa (strain UCBPP-PA14).